Here is a 245-residue protein sequence, read N- to C-terminus: Ribosomal RNA small subunit methyltransferase G (245 aa).

S-adenosyl-L-methionine contacts are provided by residues Gly90, Leu95, 140–141 (AE), and Arg158. The interval 223 to 245 (VVSARRAKPPHPKSARTGKAGTR) is disordered. Residues 227 to 245 (RRAKPPHPKSARTGKAGTR) show a composition bias toward basic residues.

The protein belongs to the methyltransferase superfamily. RNA methyltransferase RsmG family.

The protein localises to the cytoplasm. Its function is as follows. Specifically methylates the N7 position of guanine in position 518 of 16S rRNA. The protein is Ribosomal RNA small subunit methyltransferase G of Mycobacterium avium (strain 104).